A 458-amino-acid chain; its full sequence is Adenylosuccinate synthetase (458 aa).

GTP contacts are provided by residues 17–23 and 45–47; these read GDEGKGK and GHT. Aspartate 18 (proton acceptor) is an active-site residue. Residues aspartate 18 and glycine 45 each coordinate Mg(2+). IMP-binding positions include 18 to 21, 43 to 46, threonine 137, arginine 151, glutamine 247, threonine 262, and arginine 330; these read DEGK and NAGH. The active-site Proton donor is the histidine 46. Residue 326 to 332 participates in substrate binding; that stretch reads VTTGRSR. GTP contacts are provided by residues arginine 332, 358–360, and 440–442; these read KLD and STS.

Belongs to the adenylosuccinate synthetase family. In terms of assembly, homodimer. Mg(2+) is required as a cofactor.

The protein resides in the cytoplasm. The catalysed reaction is IMP + L-aspartate + GTP = N(6)-(1,2-dicarboxyethyl)-AMP + GDP + phosphate + 2 H(+). Its pathway is purine metabolism; AMP biosynthesis via de novo pathway; AMP from IMP: step 1/2. Its function is as follows. Plays an important role in the de novo pathway of purine nucleotide biosynthesis. Catalyzes the first committed step in the biosynthesis of AMP from IMP. This is Adenylosuccinate synthetase from Acidovorax sp. (strain JS42).